The sequence spans 2291 residues: Protein Ycf2 A (2291 aa).

1642–1649 (GSIGTGRS) is an ATP binding site.

The protein belongs to the Ycf2 family.

It localises to the plastid. The protein resides in the chloroplast stroma. Functionally, probable ATPase of unknown function. Its presence in a non-photosynthetic plant (Epifagus virginiana) and experiments in tobacco indicate that it has an essential function which is probably not related to photosynthesis. This chain is Protein Ycf2 A (ycf2-A), found in Atropa belladonna (Belladonna).